Here is a 219-residue protein sequence, read N- to C-terminus: MSRISKAEMSKLLSVYFIMGSNNCTKDPLQVLREALEGGITIFQFREKGEGALTGEERICFAKELQAICKEYGVPFIVNDDVELALELDADGVHVGQDDEGITSVREKMGDKIVGVSTHTIEEARWAIENGADYLGVGPIFPTSTKKDTKAVQGTKGLAHFREQGITIPIVGIGGISIENTASVIEAGADGVSVISAISLAESSYESTKKLVEEVSRSL.

Residues 44 to 48 and N79 contribute to the 4-amino-2-methyl-5-(diphosphooxymethyl)pyrimidine site; that span reads QFREK. Mg(2+) is bound by residues D80 and D99. S117 is a 4-amino-2-methyl-5-(diphosphooxymethyl)pyrimidine binding site. 143 to 145 is a 2-[(2R,5Z)-2-carboxy-4-methylthiazol-5(2H)-ylidene]ethyl phosphate binding site; that stretch reads TST. K146 lines the 4-amino-2-methyl-5-(diphosphooxymethyl)pyrimidine pocket. Residues G175 and 195-196 each bind 2-[(2R,5Z)-2-carboxy-4-methylthiazol-5(2H)-ylidene]ethyl phosphate; that span reads IS.

This sequence belongs to the thiamine-phosphate synthase family. The cofactor is Mg(2+).

The catalysed reaction is 2-[(2R,5Z)-2-carboxy-4-methylthiazol-5(2H)-ylidene]ethyl phosphate + 4-amino-2-methyl-5-(diphosphooxymethyl)pyrimidine + 2 H(+) = thiamine phosphate + CO2 + diphosphate. It catalyses the reaction 2-(2-carboxy-4-methylthiazol-5-yl)ethyl phosphate + 4-amino-2-methyl-5-(diphosphooxymethyl)pyrimidine + 2 H(+) = thiamine phosphate + CO2 + diphosphate. It carries out the reaction 4-methyl-5-(2-phosphooxyethyl)-thiazole + 4-amino-2-methyl-5-(diphosphooxymethyl)pyrimidine + H(+) = thiamine phosphate + diphosphate. It participates in cofactor biosynthesis; thiamine diphosphate biosynthesis; thiamine phosphate from 4-amino-2-methyl-5-diphosphomethylpyrimidine and 4-methyl-5-(2-phosphoethyl)-thiazole: step 1/1. Condenses 4-methyl-5-(beta-hydroxyethyl)thiazole monophosphate (THZ-P) and 2-methyl-4-amino-5-hydroxymethyl pyrimidine pyrophosphate (HMP-PP) to form thiamine monophosphate (TMP). In Bacillus thuringiensis (strain Al Hakam), this protein is Thiamine-phosphate synthase.